A 414-amino-acid polypeptide reads, in one-letter code: Protein phosphatase 2C homolog 3 (414 aa).

The PPM-type phosphatase domain occupies 23-288 (LYGLSSMQGW…DNMTVCIVAL (266 aa)). Mn(2+) contacts are provided by D62, G63, D230, and D279. Disordered stretches follow at residues 313 to 368 (APPE…TNGS) and 380 to 414 (FPHK…SAAD). Basic and acidic residues predominate over residues 350-363 (GYDKDANENSKEDD). Over residues 390–400 (SSETDIVNSNK) the composition is skewed to polar residues. Positions 401–414 (DVADDHKEAVSAAD) are enriched in basic and acidic residues.

The protein belongs to the PP2C family. Monomer. Mg(2+) serves as cofactor. The cofactor is Mn(2+).

It is found in the cytoplasm. The protein localises to the nucleus. It catalyses the reaction O-phospho-L-seryl-[protein] + H2O = L-seryl-[protein] + phosphate. It carries out the reaction O-phospho-L-threonyl-[protein] + H2O = L-threonyl-[protein] + phosphate. Its function is as follows. Dephosphorylating regulator for many key proteins. Has an important role in osmotic stability and cell shape control. It may negatively regulate the osmosensing signal transmitted through wis1 map kinase. The polypeptide is Protein phosphatase 2C homolog 3 (ptc3) (Schizosaccharomyces pombe (strain 972 / ATCC 24843) (Fission yeast)).